The following is a 183-amino-acid chain: Glutathione-regulated potassium-efflux system ancillary protein KefG (183 aa).

It belongs to the NAD(P)H dehydrogenase (quinone) family. KefG subfamily. In terms of assembly, interacts with KefB.

It is found in the cell inner membrane. It catalyses the reaction a quinone + NADH + H(+) = a quinol + NAD(+). The catalysed reaction is a quinone + NADPH + H(+) = a quinol + NADP(+). Regulatory subunit of a potassium efflux system that confers protection against electrophiles. Required for full activity of KefB. This chain is Glutathione-regulated potassium-efflux system ancillary protein KefG, found in Salmonella paratyphi B (strain ATCC BAA-1250 / SPB7).